Consider the following 774-residue polypeptide: Chondroitin sulfate synthase 2 (774 aa).

Residues 1–15 lie on the Cytoplasmic side of the membrane; sequence MRASLLLSVLRPAGP. Residues 16–34 form a helical; Signal-anchor for type II membrane protein membrane-spanning segment; it reads VAVGISLGFTLSLLSVTWV. The Lumenal segment spans residues 35–774; it reads EEPCGPGPPQ…LFEQEQGNST (740 aa). The disordered stretch occupies residues 37 to 103; sequence PCGPGPPQPG…AQPGQATKKA (67 aa). Residues 54–67 are compositionally biased toward polar residues; the sequence is GNTNAARRPNSVQP. N-linked (GlcNAc...) asparagine glycosylation is found at asparagine 138 and asparagine 361. Aspartate 616 is a binding site for a divalent metal cation.

This sequence belongs to the chondroitin N-acetylgalactosaminyltransferase family. As to quaternary structure, interacts with PRKN. Mn(2+) serves as cofactor. It depends on Co(2+) as a cofactor. Isoform 1, isoform 2 and isoform 3 are expressed in brain (at protein level).

The protein localises to the golgi apparatus. The protein resides in the golgi stack membrane. It localises to the cytoplasm. It is found in the cytosol. Its subcellular location is the mitochondrion. The protein localises to the mitochondrion matrix. It carries out the reaction 3-O-(beta-D-GlcA-(1-&gt;3)-beta-D-GalNAc-(1-&gt;4)-beta-D-GlcA-(1-&gt;3)-beta-D-Gal-(1-&gt;3)-beta-D-Gal-(1-&gt;4)-beta-D-Xyl)-L-seryl-[protein] + UDP-N-acetyl-alpha-D-galactosamine = 3-O-(beta-D-GalNAc-(1-&gt;4)-beta-D-GlcA-(1-&gt;3)-beta-D-GalNAc-(1-&gt;4)-beta-D-GlcA-(1-&gt;3)-beta-D-Gal-(1-&gt;3)-beta-D-Gal-(1-&gt;4)-beta-D-Xyl)-L-seryl-[protein] + UDP + H(+). The catalysed reaction is 3-O-{beta-D-GlcA-(1-&gt;3)-[beta-D-GalNAc-(1-&gt;4)-beta-D-GlcA-(1-&gt;3)](n)-beta-D-GalNAc-(1-&gt;4)-beta-D-GlcA-(1-&gt;3)-beta-D-Gal-(1-&gt;3)-beta-D-Gal-(1-&gt;4)-beta-D-Xyl}-L-seryl-[protein] + UDP-N-acetyl-alpha-D-galactosamine = 3-O-{[beta-D-GalNAc-(1-&gt;4)-beta-D-GlcA-(1-&gt;3)](n+1)-beta-D-GalNAc-(1-&gt;4)-beta-D-GlcA-(1-&gt;3)-beta-D-Gal-(1-&gt;3)-beta-D-Gal-(1-&gt;4)-beta-D-Xyl}-L-seryl-[protein] + UDP + H(+). It catalyses the reaction 3-O-(beta-D-GalNAc-(1-&gt;4)-beta-D-GlcA-(1-&gt;3)-beta-D-Gal-(1-&gt;3)-beta-D-Gal-(1-&gt;4)-beta-D-Xyl)-L-seryl-[protein] + UDP-alpha-D-glucuronate = 3-O-(beta-D-GlcA-(1-&gt;3)-beta-D-GalNAc-(1-&gt;4)-beta-D-GlcA-(1-&gt;3)-beta-D-Gal-(1-&gt;3)-beta-D-Gal-(1-&gt;4)-beta-D-Xyl)-L-seryl-[protein] + UDP + H(+). The enzyme catalyses 3-O-{[beta-D-GalNAc-(1-&gt;4)-beta-D-GlcA-(1-&gt;3)](n)-beta-D-GalNAc-(1-&gt;4)-beta-D-GlcA-(1-&gt;3)-beta-D-Gal-(1-&gt;3)-beta-D-Gal-(1-&gt;4)-beta-D-Xyl}-L-seryl-[protein] + UDP-alpha-D-glucuronate = 3-O-{beta-D-GlcA-(1-&gt;3)-[beta-D-GalNAc-(1-&gt;4)-beta-D-GlcA-(1-&gt;3)](n)-beta-D-GalNAc-(1-&gt;4)-beta-D-GlcA-(1-&gt;3)-beta-D-Gal-(1-&gt;3)-beta-D-Gal-(1-&gt;4)-beta-D-Xyl}-L-seryl-[protein] + UDP + H(+). Functionally, has both beta-1,3-glucuronic acid and beta-1,4-N-acetylgalactosamine transferase activity. Transfers glucuronic acid (GlcUA) from UDP-GlcUA and N-acetylgalactosamine (GalNAc) from UDP-GalNAc to the non-reducing end of the elongating chondroitin polymer. Seems to act as a specific activating factor for CHSY1 in chondroitin polymerization. In terms of biological role, may facilitate PRKN transport into the mitochondria. In collaboration with PRKN, may enhance cell viability and protect cells from oxidative stress. The chain is Chondroitin sulfate synthase 2 from Mus musculus (Mouse).